The sequence spans 434 residues: Serine--tRNA ligase (434 aa).

239-241 (TAE) serves as a coordination point for L-serine. 270 to 272 (RSE) provides a ligand contact to ATP. Residue glutamate 293 participates in L-serine binding. 357–360 (EISS) serves as a coordination point for ATP. Serine 392 serves as a coordination point for L-serine.

The protein belongs to the class-II aminoacyl-tRNA synthetase family. Type-1 seryl-tRNA synthetase subfamily. Homodimer. The tRNA molecule binds across the dimer.

It is found in the cytoplasm. The catalysed reaction is tRNA(Ser) + L-serine + ATP = L-seryl-tRNA(Ser) + AMP + diphosphate + H(+). It carries out the reaction tRNA(Sec) + L-serine + ATP = L-seryl-tRNA(Sec) + AMP + diphosphate + H(+). The protein operates within aminoacyl-tRNA biosynthesis; selenocysteinyl-tRNA(Sec) biosynthesis; L-seryl-tRNA(Sec) from L-serine and tRNA(Sec): step 1/1. Functionally, catalyzes the attachment of serine to tRNA(Ser). Is also able to aminoacylate tRNA(Sec) with serine, to form the misacylated tRNA L-seryl-tRNA(Sec), which will be further converted into selenocysteinyl-tRNA(Sec). This chain is Serine--tRNA ligase, found in Cupriavidus necator (strain ATCC 17699 / DSM 428 / KCTC 22496 / NCIMB 10442 / H16 / Stanier 337) (Ralstonia eutropha).